The following is a 286-amino-acid chain: MANKSVTVGQLEIANDRPFTLFGGMNVLESRDMAMRVCEKYVAVTNKLNVPYIFKASFDKANRSSIHSYRGPGMEEGLKIFQELKQTFGVNIITDVHEIYQCQPVAEVVDIIQLPAFLARQTDLVEAMARTGAVINVKKPQFLSPGQMGNIVEKIVECGNQQIILCDRGTNFGYDNLVVDMLSFNIMKKVSDGCPVIFDVTHALQCRDPFGSASGGRRDQVTELARAGLATGLAGLFLEAHPDPNTAKCDGPSALPLDKLEAFVAQMKAIDNLVKSFAELDTACRD.

It belongs to the KdsA family.

The protein localises to the cytoplasm. It carries out the reaction D-arabinose 5-phosphate + phosphoenolpyruvate + H2O = 3-deoxy-alpha-D-manno-2-octulosonate-8-phosphate + phosphate. Its pathway is carbohydrate biosynthesis; 3-deoxy-D-manno-octulosonate biosynthesis; 3-deoxy-D-manno-octulosonate from D-ribulose 5-phosphate: step 2/3. The protein operates within bacterial outer membrane biogenesis; lipopolysaccharide biosynthesis. This Haemophilus ducreyi (strain 35000HP / ATCC 700724) protein is 2-dehydro-3-deoxyphosphooctonate aldolase.